Consider the following 439-residue polypeptide: tRNA modification GTPase MnmE (439 aa).

(6S)-5-formyl-5,6,7,8-tetrahydrofolate is bound by residues R24, E81, and K121. A TrmE-type G domain is found at 218-363; sequence GFKVVIAGAP…LRDLIGRVVK (146 aa). K(+) is bound at residue N228. GTP is bound by residues 228-233, 247-253, and 272-275; these read NAGKSS, TDIAGTT, and DTAG. S232 contacts Mg(2+). 3 residues coordinate K(+): T247, I249, and T252. T253 is a binding site for Mg(2+). Residue K439 coordinates (6S)-5-formyl-5,6,7,8-tetrahydrofolate.

This sequence belongs to the TRAFAC class TrmE-Era-EngA-EngB-Septin-like GTPase superfamily. TrmE GTPase family. Homodimer. Heterotetramer of two MnmE and two MnmG subunits. K(+) is required as a cofactor.

Its subcellular location is the cytoplasm. Its function is as follows. Exhibits a very high intrinsic GTPase hydrolysis rate. Involved in the addition of a carboxymethylaminomethyl (cmnm) group at the wobble position (U34) of certain tRNAs, forming tRNA-cmnm(5)s(2)U34. In Rhizobium etli (strain CIAT 652), this protein is tRNA modification GTPase MnmE.